Consider the following 242-residue polypeptide: MSEWLFDLGNSRFKYAPLDGTRAGDVQAWAHGAEAMDTAALSALPSGKVAHVASVAAAGLTERVLASLRTRFEQVRVVRTAAACAGVRIAYADPSRFGVDRFLALLGARGDAPVLVAGVGTALTIDVLDADGQHHGGRIAASPTTMREALHARAVQLPPTGGAYAELANDTDDALTSGCDGAAVALIERSLQHAARTLGMPVRLLVHGGGAPPLLPLLPTAEFRAALVLDGLATWATHSAAP.

Asp-7–Lys-14 contacts ATP. Residues Tyr-91 and Gly-98–Arg-101 each bind substrate. Asp-100 serves as the catalytic Proton acceptor. Residue Thr-121 participates in ATP binding. Thr-171 provides a ligand contact to substrate.

Belongs to the type III pantothenate kinase family. In terms of assembly, homodimer. It depends on NH4(+) as a cofactor. K(+) serves as cofactor.

It localises to the cytoplasm. It carries out the reaction (R)-pantothenate + ATP = (R)-4'-phosphopantothenate + ADP + H(+). The protein operates within cofactor biosynthesis; coenzyme A biosynthesis; CoA from (R)-pantothenate: step 1/5. In terms of biological role, catalyzes the phosphorylation of pantothenate (Pan), the first step in CoA biosynthesis. The polypeptide is Type III pantothenate kinase (Xanthomonas campestris pv. campestris (strain B100)).